A 42-amino-acid chain; its full sequence is Large ribosomal subunit protein P2 (42 aa).

It belongs to the eukaryotic ribosomal protein P1/P2 family. In terms of assembly, P1 and P2 exist as dimers at the large ribosomal subunit. In terms of processing, phosphorylated.

Plays an important role in the elongation step of protein synthesis. In Triticum aestivum (Wheat), this protein is Large ribosomal subunit protein P2.